Here is a 74-residue protein sequence, read N- to C-terminus: UPF0235 protein tsr1994 (74 aa).

Belongs to the UPF0235 family.

This is UPF0235 protein tsr1994 from Thermosynechococcus vestitus (strain NIES-2133 / IAM M-273 / BP-1).